A 517-amino-acid chain; its full sequence is T-box transcription factor TBX22 (517 aa).

The interval 1–83 (MALSSRAHAF…SDESNSQESL (83 aa)) is disordered. Residues 35 to 45 (LQEEQFVEEGE) are compositionally biased toward acidic residues. The segment covering 46-66 (EILRSPSRDSQQPEKRLKAES) has biased composition (basic and acidic residues). Positions 74 to 83 (SDESNSQESL) are enriched in low complexity. Residues 93–280 (LQGSDLWKRF…RNPFAKGFRD (188 aa)) constitute a DNA-binding region (T-box). The interval 312 to 333 (TQSGSSGSSPVTSSGGAPSPLN) is disordered. Residues 314–333 (SGSSGSSPVTSSGGAPSPLN) are compositionally biased toward low complexity.

Its subcellular location is the nucleus. Probable transcriptional regulator involved in developmental processes. This is major determinant crucial to palatogenesis. This chain is T-box transcription factor TBX22 (Tbx22), found in Mus musculus (Mouse).